Consider the following 326-residue polypeptide: Ficolin-1 (326 aa).

Positions 1–29 (MELSRVAVALGPTGQLLLFLSFQTLAAQA) are cleaved as a signal peptide. Residues 55–93 (GLPGAAGPKGEAGANGPKGERGSPGVVGKAGPAGPKGDR) form the Collagen-like domain. Composition is skewed to low complexity over residues 61–71 (GPKGEAGANGP) and 78–89 (PGVVGKAGPAGP). The interval 61 to 110 (GPKGEAGANGPKGERGSPGVVGKAGPAGPKGDRGEKGARGEKGEPGQLQS) is disordered. The span at 90–104 (KGDRGEKGARGEKGE) shows a compositional bias: basic and acidic residues. The Fibrinogen C-terminal domain maps to 109 to 326 (QSCATGPRTC…QVSEMKVRLT (218 aa)). Intrachain disulfides connect Cys111–Cys139 and Cys118–Cys146. Positions 115 to 154 (PRTCKELLTRGHFLSGWHTIYLPDCQPLTVLCDMDTDGGG) are a domain; contributes to trimerization. A b domain; contributes to trimerization region spans residues 155 to 243 (WTVFQRRSDG…LVLGGFLEGN (89 aa)). Asp262 and Asp264 together coordinate Ca(2+). Residue Asn265 is glycosylated (N-linked (GlcNAc...) asparagine). Cys270 and Cys283 form a disulfide bridge. Position 282–284 (282–284 (ACH)) interacts with a carbohydrate. An N-linked (GlcNAc...) asparagine glycan is attached at Asn313. Residues 317-326 (QVSEMKVRLT) are p domain.

Belongs to the ficolin lectin family. Homotrimer. Interacts with elastin/ELN. Interacts (via Fibrinogen C-terminal domain) with FFAR2. Interacts with CRP; may regulate monocyte activation by FCN1. In terms of tissue distribution, most abundantly expressed in placenta and lung.

It is found in the secreted. Its subcellular location is the cell membrane. Functionally, extracellular lectin functioning as a pattern-recognition receptor in innate immunity. Binds the sugar moieties of pathogen-associated molecular patterns (PAMPs) displayed on microbes and activates the lectin pathway of the complement system. May also activate monocytes through a G protein-coupled receptor, FFAR2, inducing the secretion of interleukin-8/IL-8. Binds preferentially to 9-O-acetylated 2-6-linked sialic acid derivatives and to various glycans containing sialic acid engaged in a 2-3 linkage. In Sus scrofa (Pig), this protein is Ficolin-1 (FCN1).